Here is a 238-residue protein sequence, read N- to C-terminus: Ribosomal RNA small subunit methyltransferase G (238 aa).

S-adenosyl-L-methionine is bound by residues Gly77, Phe82, 128 to 129 (AE), and Arg147.

The protein belongs to the methyltransferase superfamily. RNA methyltransferase RsmG family.

The protein resides in the cytoplasm. Specifically methylates the N7 position of guanine in position 535 of 16S rRNA. In Geobacillus kaustophilus (strain HTA426), this protein is Ribosomal RNA small subunit methyltransferase G.